A 776-amino-acid polypeptide reads, in one-letter code: Genome polyprotein (776 aa).

Residues 1–27 (MAGKAVLKGKGGGPPRRASKVAPKKTR) form a disordered region. Residues 1–98 (MAGKAVLKGK…LHRRGSRRTT (98 aa)) lie on the Cytoplasmic side of the membrane. Residues 17-27 (RASKVAPKKTR) are compositionally biased toward basic residues. The segment at 33–68 (MPNGLVLMRMLGVLWHALTGTARSPVLKAFWKVVPL) is hydrophobic; homodimerization of capsid protein C. The propeptide at 97-117 (TTIDWMTPLLITVMLGMCLTA) is ER anchor for the protein C, removed in mature form by serine protease NS3. The chain crosses the membrane as a helical span at residues 99-117 (IDWMTPLLITVMLGMCLTA). The Extracellular segment spans residues 118–242 (TVRRERDGSM…HLTRVEGWVW (125 aa)). Asn-144 is a glycosylation site (N-linked (GlcNAc...) asparagine; by host). Residues 243-260 (KNKLFTLSLVMVAWLMVD) form a helical membrane-spanning segment. Position 261 (Gly-261) is a topological domain, cytoplasmic. A helical membrane pass occupies residues 262–280 (LLPRILIVVVALALVPAYA). Topologically, residues 281 to 727 (SRCTHLENRD…HTVLGGAFNT (447 aa)) are extracellular. Intrachain disulfides connect Cys-283-Cys-310, Cys-340-Cys-396, Cys-354-Cys-385, and Cys-372-Cys-401. Asn-434 carries N-linked (GlcNAc...) asparagine; by host glycosylation. Intrachain disulfides connect Cys-466-Cys-570 and Cys-587-Cys-618. An intramembrane region (helical) is located at residues 728–748 (LLGGVGFLPKILLGVAMAWLG). Topologically, residues 749-755 (LNMRNPT) are extracellular. An intramembrane region (helical) is located at residues 756 to 776 (LSMGFLLSGGLVLAMTLGVGA).

Specific enzymatic cleavages in vivo yield mature proteins Peptide 2K acts as a signal sequence and is removed from the N-terminus of NS4B by the host signal peptidase in the ER lumen. Signal cleavage at the 2K-4B site requires a prior NS3 protease-mediated cleavage at the 4A-2K site.

It localises to the virion. The protein resides in the secreted. Its subcellular location is the virion membrane. The protein localises to the host endoplasmic reticulum membrane. Its function is as follows. Capsid protein C self-assembles to form an icosahedral capsid about 30 nm in diameter. The capsid encapsulates the genomic RNA. In terms of biological role, prM acts as a chaperone for envelope protein E during intracellular virion assembly by masking and inactivating envelope protein E fusion peptide. prM is matured in the last step of virion assembly, presumably to avoid catastrophic activation of the viral fusion peptide induced by the acidic pH of the trans-Golgi network. After cleavage by host furin, the pr peptide is released in the extracellular medium and small envelope protein M and envelope protein E homodimers are dissociated. Functionally, envelope protein E binding to host cell surface receptor is followed by virus internalization through clathrin-mediated endocytosis. Envelope protein E is subsequently involved in membrane fusion between virion and host late endosomes. Synthesized as a homodimer with prM which acts as a chaperone for envelope protein E. After cleavage of prM, envelope protein E dissociate from small envelope protein M and homodimerizes. The sequence is that of Genome polyprotein from Homo sapiens (Human).